The following is a 519-amino-acid chain: MIKPEARLHILYDISKELISSFPLDNLLKAAMNALVEHLRLRDGGIVIHGSGGEPWINVRAPIGDDVRSRSLTIEQADAINRVIASGEKHFGKNSVVLPVKVNRKAIGALWIDFAQKSGAQDESLLAMIAVLIGLTCQRDRELCSDGGSVAEEQQAGQIPKIKPKPHPTQLDKIDWIVGESPALKRVLATTKIVAATNSAVLLRGESGTGKECFARAIHALSIRKSKAFIKLNCAALSETVLESELFGHEKGAFTGALLQRAGRFELANGGTLLLDEIGDVSPQFQAKLLRVLQEGEFERLGGTKTLKVDVRVICATNKNLEVAVLRGEFRADLYYRINVVPIILPPLRQRDGDISLLAQVFLEQFNNANDRNCDFGPSAIDILSKCAFPGNVRELDNCVQRTATLASSNTITSSDFACQQDQCSSALLRKADGDGIGNDAMNGLNSRDTMSGGLCAHAGTPSGAAATIEAAGLTERDRLIKAMERAGWVQAKAARILGKTPRQVGYALRRHRIDVKKE.

One can recognise a Sigma-54 factor interaction domain in the interval 177 to 405; sequence IVGESPALKR…LDNCVQRTAT (229 aa). Residues 205-212 and 268-277 contribute to the ATP site; these read GESGTGKE and ANGGTLLLDE. An inter-domain linker region spans residues 406 to 476; sequence LASSNTITSS…ATIEAAGLTE (71 aa). Residues cysteine 419 and cysteine 424 each coordinate a divalent metal cation. Positions 477 to 519 are C-terminal DNA-binding domain; sequence RDRLIKAMERAGWVQAKAARILGKTPRQVGYALRRHRIDVKKE. Residues 491–510 constitute a DNA-binding region (H-T-H motif); the sequence is QAKAARILGKTPRQVGYALR.

Interacts with sigma-54.

In terms of biological role, required for activation of most nif operons, which are directly involved in nitrogen fixation. The protein is Nif-specific regulatory protein (nifA) of Rhizobium leguminosarum.